Reading from the N-terminus, the 378-residue chain is Ferrochelatase (378 aa).

Residues His214 and Glu295 each coordinate Fe cation.

Belongs to the ferrochelatase family.

Its subcellular location is the cytoplasm. The catalysed reaction is heme b + 2 H(+) = protoporphyrin IX + Fe(2+). The protein operates within porphyrin-containing compound metabolism; protoheme biosynthesis; protoheme from protoporphyrin-IX: step 1/1. Its function is as follows. Catalyzes the ferrous insertion into protoporphyrin IX. The protein is Ferrochelatase of Hydrogenovibrio crunogenus (strain DSM 25203 / XCL-2) (Thiomicrospira crunogena).